A 246-amino-acid polypeptide reads, in one-letter code: Small ribosomal subunit protein uS2 (246 aa).

Belongs to the universal ribosomal protein uS2 family.

The polypeptide is Small ribosomal subunit protein uS2 (Burkholderia vietnamiensis (strain G4 / LMG 22486) (Burkholderia cepacia (strain R1808))).